The following is a 336-amino-acid chain: UDP-3-O-acylglucosamine N-acyltransferase (336 aa).

The active-site Proton acceptor is the His236.

This sequence belongs to the transferase hexapeptide repeat family. LpxD subfamily. Homotrimer.

It catalyses the reaction a UDP-3-O-[(3R)-3-hydroxyacyl]-alpha-D-glucosamine + a (3R)-hydroxyacyl-[ACP] = a UDP-2-N,3-O-bis[(3R)-3-hydroxyacyl]-alpha-D-glucosamine + holo-[ACP] + H(+). The protein operates within bacterial outer membrane biogenesis; LPS lipid A biosynthesis. Catalyzes the N-acylation of UDP-3-O-acylglucosamine using 3-hydroxyacyl-ACP as the acyl donor. Is involved in the biosynthesis of lipid A, a phosphorylated glycolipid that anchors the lipopolysaccharide to the outer membrane of the cell. This chain is UDP-3-O-acylglucosamine N-acyltransferase, found in Aromatoleum aromaticum (strain DSM 19018 / LMG 30748 / EbN1) (Azoarcus sp. (strain EbN1)).